Reading from the N-terminus, the 397-residue chain is Chorismate synthase (397 aa).

Arg40 and Arg46 together coordinate NADP(+). FMN-binding positions include 129–131 (RSS), 257–258 (QA), Gly302, 317–321 (KPISS), and Arg343.

This sequence belongs to the chorismate synthase family. Homotetramer. FMNH2 serves as cofactor.

The catalysed reaction is 5-O-(1-carboxyvinyl)-3-phosphoshikimate = chorismate + phosphate. The protein operates within metabolic intermediate biosynthesis; chorismate biosynthesis; chorismate from D-erythrose 4-phosphate and phosphoenolpyruvate: step 7/7. Functionally, catalyzes the anti-1,4-elimination of the C-3 phosphate and the C-6 proR hydrogen from 5-enolpyruvylshikimate-3-phosphate (EPSP) to yield chorismate, which is the branch point compound that serves as the starting substrate for the three terminal pathways of aromatic amino acid biosynthesis. This reaction introduces a second double bond into the aromatic ring system. The chain is Chorismate synthase from Chlorobium limicola (strain DSM 245 / NBRC 103803 / 6330).